The chain runs to 320 residues: ATP-dependent 6-phosphofructokinase (320 aa).

Gly-11 is an ATP binding site. 21–25 contributes to the ADP binding site; sequence RAVTK. Residues 72-73 and 102-105 each bind ATP; these read RF and GDGS. Residue Asp-103 participates in Mg(2+) binding. 125 to 127 contributes to the substrate binding site; that stretch reads TID. Residue Asp-127 is the Proton acceptor of the active site. Arg-154 serves as a coordination point for ADP. Residues Arg-162 and 169-171 contribute to the substrate site; that span reads MGR. ADP is bound by residues 185 to 187 and 213 to 215; these read GAD and KDH. Residues Glu-222, Arg-243, and 249-252 each bind substrate; that span reads HMQR.

This sequence belongs to the phosphofructokinase type A (PFKA) family. ATP-dependent PFK group I subfamily. Prokaryotic clade 'B1' sub-subfamily. As to quaternary structure, homotetramer. The cofactor is Mg(2+).

The protein resides in the cytoplasm. The enzyme catalyses beta-D-fructose 6-phosphate + ATP = beta-D-fructose 1,6-bisphosphate + ADP + H(+). Its pathway is carbohydrate degradation; glycolysis; D-glyceraldehyde 3-phosphate and glycerone phosphate from D-glucose: step 3/4. Its activity is regulated as follows. Allosterically activated by ADP and other diphosphonucleosides, and allosterically inhibited by phosphoenolpyruvate. Catalyzes the phosphorylation of D-fructose 6-phosphate to fructose 1,6-bisphosphate by ATP, the first committing step of glycolysis. This Lactobacillus acidophilus (strain ATCC 700396 / NCK56 / N2 / NCFM) protein is ATP-dependent 6-phosphofructokinase.